The following is a 336-amino-acid chain: Pyridoxal 5'-phosphate synthase subunit PdxS (336 aa).

Asp64 is a D-ribose 5-phosphate binding site. Lys121 functions as the Schiff-base intermediate with D-ribose 5-phosphate in the catalytic mechanism. D-ribose 5-phosphate is bound at residue Gly193. A D-glyceraldehyde 3-phosphate-binding site is contributed by Lys205. Residues Gly254 and 275–276 (GS) contribute to the D-ribose 5-phosphate site.

It belongs to the PdxS/SNZ family. As to quaternary structure, in the presence of PdxT, forms a dodecamer of heterodimers.

It catalyses the reaction aldehydo-D-ribose 5-phosphate + D-glyceraldehyde 3-phosphate + L-glutamine = pyridoxal 5'-phosphate + L-glutamate + phosphate + 3 H2O + H(+). It functions in the pathway cofactor biosynthesis; pyridoxal 5'-phosphate biosynthesis. In terms of biological role, catalyzes the formation of pyridoxal 5'-phosphate from ribose 5-phosphate (RBP), glyceraldehyde 3-phosphate (G3P) and ammonia. The ammonia is provided by the PdxT subunit. Can also use ribulose 5-phosphate and dihydroxyacetone phosphate as substrates, resulting from enzyme-catalyzed isomerization of RBP and G3P, respectively. This is Pyridoxal 5'-phosphate synthase subunit PdxS from Pyrobaculum aerophilum (strain ATCC 51768 / DSM 7523 / JCM 9630 / CIP 104966 / NBRC 100827 / IM2).